We begin with the raw amino-acid sequence, 66 residues long: Large ribosomal subunit protein bL33c (66 aa).

The protein belongs to the bacterial ribosomal protein bL33 family.

The protein resides in the plastid. Its subcellular location is the chloroplast. This chain is Large ribosomal subunit protein bL33c, found in Nicotiana sylvestris (Wood tobacco).